A 275-amino-acid polypeptide reads, in one-letter code: 3-methyl-2-oxobutanoate hydroxymethyltransferase (275 aa).

Positions 51 and 90 each coordinate Mg(2+). 3-methyl-2-oxobutanoate contacts are provided by residues 51-52 (DS), Asp-90, and Lys-120. Glu-122 contacts Mg(2+). The active-site Proton acceptor is the Glu-189.

This sequence belongs to the PanB family. As to quaternary structure, homodecamer; pentamer of dimers. Mg(2+) serves as cofactor.

The protein resides in the cytoplasm. The enzyme catalyses 3-methyl-2-oxobutanoate + (6R)-5,10-methylene-5,6,7,8-tetrahydrofolate + H2O = 2-dehydropantoate + (6S)-5,6,7,8-tetrahydrofolate. It functions in the pathway cofactor biosynthesis; (R)-pantothenate biosynthesis; (R)-pantoate from 3-methyl-2-oxobutanoate: step 1/2. Its function is as follows. Catalyzes the reversible reaction in which hydroxymethyl group from 5,10-methylenetetrahydrofolate is transferred onto alpha-ketoisovalerate to form ketopantoate. This Caulobacter vibrioides (strain ATCC 19089 / CIP 103742 / CB 15) (Caulobacter crescentus) protein is 3-methyl-2-oxobutanoate hydroxymethyltransferase.